A 233-amino-acid polypeptide reads, in one-letter code: DNA repair protein RecO (233 aa).

The protein belongs to the RecO family.

Its function is as follows. Involved in DNA repair and RecF pathway recombination. This is DNA repair protein RecO from Francisella philomiragia subsp. philomiragia (strain ATCC 25017 / CCUG 19701 / FSC 153 / O#319-036).